A 750-amino-acid polypeptide reads, in one-letter code: MIIRPSEPEVKIAVDRDPVKTSFEEWARPGHFSRTIAKGPDTTTWIWNLHADAHDFDSHTGDLEEISRKVFSAHFGQLSIIFLWLSGMYFHGARFSNYEAWLSDPTHIGPSAQVVWPIVGQEILNGDVGGGFRGIQITSGFFQIWRASGITSELQLYCTAIGALIFASLMLFAGWFHYHKAAPKLAWFQDVESMLNHHLAGLLGLGSLSWAGHQIHVSLPINQFLDAGVDPKEIPLPHEFILNRDLLAQLYPSFAEGATPFFTLNWSKYAEFLSFRGGLDPITGGLWLSDIAHHHLAIAILFLIAGHMYRTNWGIGHGLKDILEAHKGPFTGQGHKGLYEILTTSWHAQLSLNLAMLGSTTIVVAHHMYSMPPYPYLATDYGTQLSLFTHHMWIGGFLIVGAAAHAAIFMVRDYDPTTRYNDLLDRVLRHRDAIISHLNWVCIFLGFHSFGLYIHNDTMSALGRPQDMFSDTAIQLQPIFAQWIQNIHAGAPGVTAPGATTSTSLTWGGGELVAVGGKVALLPIPLGTADFLVHHIHAFTIHVTVLILLKGVLFARSSRLIPDKANLGFRFPCDGPGRGGTCQVSAWDHVFLGLFWMYNSISVVIFHFSWKMQSDVWGTISDQGIVTHITGGNFAQSSITINGWLRDFLWAQASQVIQSYGSSLSAYGLFFLGAHFVWAFSLMFLFSGRGYWQELIESIVWAHNKLKVAPATQPRALSIIQGRAVGVTHYLLGGIATTWAFFLARIIAVG.

A run of 8 helical transmembrane segments spans residues 70–93 (VFSA…FHGA), 156–179 (LYCT…FHYH), 195–219 (LNHH…HVSL), 291–309 (IAHH…GHMY), 346–369 (WHAQ…HHMY), 385–411 (LSLF…IFMV), 433–455 (AIIS…LYIH), and 531–549 (FLVH…LILL). [4Fe-4S] cluster-binding residues include cysteine 573 and cysteine 582. 2 helical membrane-spanning segments follow: residues 589–610 (HVFL…HFSW) and 664–686 (LSAY…MFLF). Histidine 675 contributes to the chlorophyll a' binding site. Chlorophyll a is bound by residues methionine 683 and tyrosine 691. Tryptophan 692 provides a ligand contact to phylloquinone. A helical transmembrane segment spans residues 724–744 (AVGVTHYLLGGIATTWAFFLA).

The protein belongs to the PsaA/PsaB family. As to quaternary structure, the PsaA/B heterodimer binds the P700 chlorophyll special pair and subsequent electron acceptors. PSI consists of a core antenna complex that captures photons, and an electron transfer chain that converts photonic excitation into a charge separation. The eukaryotic PSI reaction center is composed of at least 11 subunits. Requires P700 is a chlorophyll a/chlorophyll a' dimer, A0 is one or more chlorophyll a, A1 is one or both phylloquinones and FX is a shared 4Fe-4S iron-sulfur center. as cofactor.

The protein resides in the plastid. The protein localises to the chloroplast thylakoid membrane. The catalysed reaction is reduced [plastocyanin] + hnu + oxidized [2Fe-2S]-[ferredoxin] = oxidized [plastocyanin] + reduced [2Fe-2S]-[ferredoxin]. Its function is as follows. PsaA and PsaB bind P700, the primary electron donor of photosystem I (PSI), as well as the electron acceptors A0, A1 and FX. PSI is a plastocyanin-ferredoxin oxidoreductase, converting photonic excitation into a charge separation, which transfers an electron from the donor P700 chlorophyll pair to the spectroscopically characterized acceptors A0, A1, FX, FA and FB in turn. Oxidized P700 is reduced on the lumenal side of the thylakoid membrane by plastocyanin. The sequence is that of Photosystem I P700 chlorophyll a apoprotein A1 from Saccharum hybrid (Sugarcane).